Reading from the N-terminus, the 128-residue chain is Head peptide (128 aa).

The signal sequence occupies residues 1–22; the sequence is MWKFASIVVLVVCLAWAVYCED. The residue at position 23 (glutamine 23) is a Pyrrolidone carboxylic acid. At proline 26 the chain carries Hydroxyproline; partial. The tract at residues 27 to 128 is disordered; that stretch reads SLKTRFGRSA…GRANKKRAAN (102 aa). The residue at position 32 (phenylalanine 32) is a Phenylalanine amide. Positions 35-55 are excised as a propeptide; sequence SADEPESDNYVSNDIMEKRSA. Glutamine 56 carries the post-translational modification Pyrrolidone carboxylic acid. Proline 59 bears the Hydroxyproline; partial mark. At phenylalanine 65 the chain carries Phenylalanine amide. A compositionally biased stretch (basic and acidic residues) spans 66–78; the sequence is GRSEGAEVMEKRS. A propeptide spanning residues 68 to 79 is cleaved from the precursor; it reads SEGAEVMEKRSA. Glutamine 80 bears the Pyrrolidone carboxylic acid mark. Proline 83 is modified (hydroxyproline; partial). At phenylalanine 89 the chain carries Phenylalanine amide. Residues 92–128 constitute a propeptide that is removed on maturation; sequence SVANPESDGYMRKRSAESEPFVTRIRHGRANKKRAAN. A compositionally biased stretch (basic residues) spans 115-128; it reads RIRHGRANKKRAAN.

Belongs to the NPY family. Expressed in the brain, terminal ganglion, and midgut of adults: numerous neurosecretory cells and midgut endocrine cells. Expression is dynamic depending on reproductive cycle.

The protein resides in the secreted. Functionally, has a role in inhibiting host-seeking behavior during a reproductive cycle. The protein is Head peptide of Aedes aegypti (Yellowfever mosquito).